A 296-amino-acid chain; its full sequence is Protoheme IX farnesyltransferase (296 aa).

9 helical membrane passes run 13–33, 35–55, 84–104, 107–127, 132–152, 162–182, 208–228, 229–249, and 264–284; these read IIFG…KGII, YPLF…GCVF, VTLI…YIAA, LAMW…SLYM, VYGT…GYCA, LILL…IAIF, ITLY…VGYA, GYKY…MALR, and FVFS…DFSV.

It belongs to the UbiA prenyltransferase family. Protoheme IX farnesyltransferase subfamily.

Its subcellular location is the cell inner membrane. It carries out the reaction heme b + (2E,6E)-farnesyl diphosphate + H2O = Fe(II)-heme o + diphosphate. Its pathway is porphyrin-containing compound metabolism; heme O biosynthesis; heme O from protoheme: step 1/1. Its function is as follows. Converts heme B (protoheme IX) to heme O by substitution of the vinyl group on carbon 2 of heme B porphyrin ring with a hydroxyethyl farnesyl side group. This chain is Protoheme IX farnesyltransferase, found in Edwardsiella ictaluri (strain 93-146).